The following is a 476-amino-acid chain: MNVLHVASECNPFFKTGGLADVLGSLPKALIKQGINVSVILPKYGHLSDEWQNQLTLKKSFTVSVTWRNQYCGLEQFVDQGVTYYFIDNEYYFKRERLYGYLDEAERFTFFNHAVLSSLPFLDESPDLIHCHDWQSGLIPAYMKTGSVENPVPTVFTIHNLRYQGAFPPDVFRELLHFAPEHFAGLEMDGAINFLKGALVHSDRVTTVSPTYAQEIQTPAFGEGLHGLLHQERGKTRGILNGIDLEDFDPKTDPHVTYPYKHNQMEKRKNKQVIQRLFELPERKDIPLIAMVSRLVEEKGVPLLTQIAGELVTTENVQLAILGTGDPSLEDQLHHLASLHPHQISFKCVFAEPLARKLYAGADLFIMPSRFEPCGLSQMISLRYETVPIVRETGGLYDTIQSYNEEIGEGNGFSFTHYNAHDFLYTIKRALRFYRTEKEWENLLLNIYSSEVGWDVSAKQYTALYEEILGKRKVEA.

K15 contacts ADP-alpha-D-glucose.

It belongs to the glycosyltransferase 1 family. Bacterial/plant glycogen synthase subfamily.

The catalysed reaction is [(1-&gt;4)-alpha-D-glucosyl](n) + ADP-alpha-D-glucose = [(1-&gt;4)-alpha-D-glucosyl](n+1) + ADP + H(+). The protein operates within glycan biosynthesis; glycogen biosynthesis. Its function is as follows. Synthesizes alpha-1,4-glucan chains using ADP-glucose. This is Glycogen synthase from Halalkalibacterium halodurans (strain ATCC BAA-125 / DSM 18197 / FERM 7344 / JCM 9153 / C-125) (Bacillus halodurans).